A 287-amino-acid chain; its full sequence is GTPase Era (287 aa).

In terms of domain architecture, Era-type G spans 11 to 174 (RSGFVAVIGR…RSYLASSLPE (164 aa)). Residues 19-26 (GRTNVGKS) and 66-70 (DTPGI) each bind GTP. The KH type-2 domain maps to 205–273 (LRDELPQALA…PLTLRVKVQR (69 aa)).

It belongs to the TRAFAC class TrmE-Era-EngA-EngB-Septin-like GTPase superfamily. Era GTPase family. In terms of assembly, monomer.

The protein localises to the cytoplasm. The protein resides in the cell membrane. Its function is as follows. An essential GTPase that binds both GDP and GTP, with rapid nucleotide exchange. Plays a role in 16S rRNA processing and 30S ribosomal subunit biogenesis and possibly also in cell cycle regulation and energy metabolism. This chain is GTPase Era, found in Acidimicrobium ferrooxidans (strain DSM 10331 / JCM 15462 / NBRC 103882 / ICP).